Consider the following 348-residue polypeptide: Lysophosphatidic acid receptor 2 (348 aa).

Residues 1–30 lie on the Extracellular side of the membrane; the sequence is MGQCYYNETIGFFYNNSGKELSSHWRPKDV. Asparagine 7 and asparagine 15 each carry an N-linked (GlcNAc...) asparagine glycan. Residues 31–51 form a helical membrane-spanning segment; the sequence is VVVALGLTVSVLVLLTNLLVI. Topologically, residues 52–66 are cytoplasmic; that stretch reads AAIASNRRFHQPIYY. Residues 67–87 form a helical membrane-spanning segment; the sequence is LLGNLAAADLFAGVAYLFLMF. Over 88-100 the chain is Extracellular; the sequence is HTGPRTARLSLEG. A helical transmembrane segment spans residues 101 to 123; sequence WFLRQGLLDTSLTASVATLLAIA. Residues 124-143 are Cytoplasmic-facing; that stretch reads VERHRSVMAVQLHSRLPRGR. The helical transmembrane segment at 144–164 threads the bilayer; the sequence is VVMLIVGVWVAALGLGLLPAH. Over 165 to 185 the chain is Extracellular; the sequence is SWHCLCALDRCSRMAPLLSRS. A helical membrane pass occupies residues 186–206; it reads YLAVWALSSLLVFLLMVAVYT. Residues 207-239 lie on the Cytoplasmic side of the membrane; it reads RIFFYVRRRVQRMAEHVSCHPRYRETTLSLVKT. Residues 240–260 form a helical membrane-spanning segment; it reads VVIILGAFVVCWTPGQVVLLL. Residues 261-276 are Extracellular-facing; the sequence is DGLGCESCNVLAVEKY. A helical transmembrane segment spans residues 277–294; that stretch reads FLLLAEANSLVNAAVYSC. Residues 295–348 lie on the Cytoplasmic side of the membrane; sequence RDAEMRRTFRRLLCCACLRQSTRESVHYTSSAQGGASTRIMLPENGHPLMDSTL. Residue cysteine 308 is the site of S-palmitoyl cysteine attachment. Positions 345-348 match the PDZ-binding motif; the sequence is DSTL.

Belongs to the G-protein coupled receptor 1 family. As to quaternary structure, interacts with SLC9A3R2/NHERF2, MAGI3 and PLCB3. Interacts with RALA and GRK2. As to expression, expressed most abundantly in testes and peripheral blood leukocytes with less expression in pancreas, spleen, thymus and prostate. Little or no expression in heart, brain, placenta, lung, liver, skeletal muscle, kidney, ovary, small intestine, or colon.

It localises to the cell surface. The protein resides in the cell membrane. Its function is as follows. Receptor for lysophosphatidic acid (LPA), a mediator of diverse cellular activities. Seems to be coupled to the G(i)/G(o), G(12)/G(13), and G(q) families of heteromeric G proteins. Plays a key role in phospholipase C-beta (PLC-beta) signaling pathway. Stimulates phospholipase C (PLC) activity in a manner that is independent of RALA activation. In Homo sapiens (Human), this protein is Lysophosphatidic acid receptor 2.